We begin with the raw amino-acid sequence, 342 residues long: NADPH-dependent methylglyoxal reductase GRE2 (342 aa).

Residues 7-12 (GANGFI), Arg-32, Lys-36, 57-58 (DI), Tyr-165, Lys-169, Val-199, and Ser-216 contribute to the NADP(+) site. Lys-169 (proton donor) is an active-site residue. Position 333 is a phosphoserine (Ser-333).

This sequence belongs to the NAD(P)-dependent epimerase/dehydratase family. Dihydroflavonol-4-reductase subfamily. As to quaternary structure, monomer. Post-translationally, the N-terminus is blocked.

The protein resides in the cytoplasm. It is found in the nucleus. It catalyses the reaction (S)-lactaldehyde + NADP(+) = methylglyoxal + NADPH + H(+). The enzyme catalyses 3-methylbutanol + NADP(+) = 3-methylbutanal + NADPH + H(+). It carries out the reaction 2,5-hexanedione + 2 NADPH + 2 H(+) = (2S,5S)-hexanediol + 2 NADP(+). The catalysed reaction is (S)-3-chloro-1-phenyl-1-propanol + NADP(+) = 3-chloro-1-phenyl-1-propanone + NADPH + H(+). Its activity is regulated as follows. Activated by glutathione. Its function is as follows. Catalyzes the irreversible reduction of the cytotoxic compound methylglyoxal (MG, 2-oxopropanal) to (S)-lactaldehyde as an alternative to detoxification of MG by glyoxalase I GLO1. MG is synthesized via a bypath of glycolysis from dihydroxyacetone phosphate and is believed to play a role in cell cycle regulation and stress adaptation. Also catalyzes the reduction of 3-methylbutanal to 3-methylbutanol. Acts as a suppressor of 3-methylbutanol-induced filamentation by modulating the levels of 3-methylbutanal, the signal to which cells respond by filamentation. Also involved in ergosterol metabolism. The chain is NADPH-dependent methylglyoxal reductase GRE2 (GRE2) from Saccharomyces cerevisiae (strain ATCC 204508 / S288c) (Baker's yeast).